We begin with the raw amino-acid sequence, 147 residues long: UPF0208 membrane protein SO_2914 (147 aa).

Transmembrane regions (helical) follow at residues 40–60 (LAIL…LYTY) and 68–88 (ALTI…WLGW).

The protein belongs to the UPF0208 family.

It localises to the cell inner membrane. The sequence is that of UPF0208 membrane protein SO_2914 from Shewanella oneidensis (strain ATCC 700550 / JCM 31522 / CIP 106686 / LMG 19005 / NCIMB 14063 / MR-1).